Here is a 1080-residue protein sequence, read N- to C-terminus: Protein transport protein SEC24 C (1080 aa).

Pro residues predominate over residues 1-10 (MVAPVPPGAP). Disordered stretches follow at residues 1 to 189 (MVAP…SGMI), 201 to 220 (GSGG…TTPQ), and 316 to 367 (TAMG…SDYV). The span at 12-43 (PNSQQNSGPPNFYPGSQGNSNALADNMQNLSL) shows a compositional bias: polar residues. The segment covering 45 to 70 (RPPPMMPGSGPRPPPPFGQSPQPFPQ) has biased composition (pro residues). 3 stretches are compositionally biased toward low complexity: residues 71-84 (QSPS…GPSP), 142-160 (PAAS…SVAA), and 178-189 (GSGMSMPPSGMI). A compositionally biased stretch (polar residues) spans 340 to 356 (GSSSSPTVFETRQSNQA). Residues Cys430, Cys433, Cys452, and Cys455 each contribute to the Zn(2+) site. The interval 430-455 (CSRCKGYINPFMKFIDQGRKFICNFC) is zinc finger-like.

Belongs to the SEC23/SEC24 family. SEC24 subfamily. As to quaternary structure, component of the coat protein complex II (COPII), composed of at least five proteins: the Sec23/24 complex, the Sec13/31 complex and Sar1. Mainly expressed at low levels in pollen, leaves, roots and stems.

The protein localises to the cytoplasmic vesicle. The protein resides in the COPII-coated vesicle membrane. It is found in the endoplasmic reticulum membrane. It localises to the golgi apparatus membrane. Component of the coat protein complex II (COPII), that covers ER-derived vesicles involved in transport from the endoplasmic reticulum to the Golgi apparatus. COPII is composed of at least five proteins: the SEC23/24 complex, the SEC13/31 complex, and the protein SAR1. Acts in the cytoplasm to promote the transport of secretory, plasma membrane, and vacuolar proteins from the endoplasmic reticulum to the Golgi complex. This chain is Protein transport protein SEC24 C, found in Arabidopsis thaliana (Mouse-ear cress).